We begin with the raw amino-acid sequence, 263 residues long: Urease accessory protein UreD 1 (263 aa).

Belongs to the UreD family. As to quaternary structure, ureD, UreF and UreG form a complex that acts as a GTP-hydrolysis-dependent molecular chaperone, activating the urease apoprotein by helping to assemble the nickel containing metallocenter of UreC. The UreE protein probably delivers the nickel.

The protein resides in the cytoplasm. Its function is as follows. Required for maturation of urease via the functional incorporation of the urease nickel metallocenter. This Synechococcus sp. (strain JA-3-3Ab) (Cyanobacteria bacterium Yellowstone A-Prime) protein is Urease accessory protein UreD 1.